The chain runs to 37 residues: Large ribosomal subunit protein bL36 (37 aa).

It belongs to the bacterial ribosomal protein bL36 family.

The sequence is that of Large ribosomal subunit protein bL36 from Mycoplasma pneumoniae (strain ATCC 29342 / M129 / Subtype 1) (Mycoplasmoides pneumoniae).